The chain runs to 95 residues: MKPLHEILKRPLVTEKTVQQEGEAQVVAFEVKREANKVEIKKAVEQAFEVKVKNVNTVLVAGKVKRLGRTYGKRSNWKKAYVTLAEGSSIDLFGV.

The protein belongs to the universal ribosomal protein uL23 family. As to quaternary structure, part of the 50S ribosomal subunit. Contacts protein L29, and trigger factor when it is bound to the ribosome.

One of the early assembly proteins it binds 23S rRNA. One of the proteins that surrounds the polypeptide exit tunnel on the outside of the ribosome. Forms the main docking site for trigger factor binding to the ribosome. This chain is Large ribosomal subunit protein uL23, found in Syntrophotalea carbinolica (strain DSM 2380 / NBRC 103641 / GraBd1) (Pelobacter carbinolicus).